Here is a 239-residue protein sequence, read N- to C-terminus: Norbelladine 4'-O-methyltransferase (239 aa).

S-adenosyl-L-methionine contacts are provided by residues Val-55, Glu-77, 79 to 80, Ser-85, Asp-103, and Ala-132; that span reads GV. Asp-155 lines the a divalent metal cation pocket. Asp-157 is a binding site for S-adenosyl-L-methionine. Residues Asp-181 and Asn-182 each contribute to the a divalent metal cation site.

This sequence belongs to the class I-like SAM-binding methyltransferase superfamily. Cation-dependent O-methyltransferase family. Mg(2+) serves as cofactor. In terms of tissue distribution, mostly expressed in bulbs, and, to a lower extent, in stems and roots.

The catalysed reaction is norbelladine + S-adenosyl-L-methionine = 4'-O-methylnorbelladine + S-adenosyl-L-homocysteine + H(+). It functions in the pathway alkaloid biosynthesis. In terms of biological role, 4'-O-methyltransferase converting norbelladine to 4'-O-methylnorbelladine. 4'-O-methylnorbelladine is a precursor to all Amaryllidaceae alkaloids such as galanthamine, lycorine and haemanthamine, and including haemanthamine- and crinamine-type alkaloids, promising anticancer agents. In Narcissus pseudonarcissus (Daffodil), this protein is Norbelladine 4'-O-methyltransferase.